Reading from the N-terminus, the 51-residue chain is MREYPNGEKTHLTVMAAGFPSLTGDHKVIYVAADRHVTSEEILEAAIRLLS.

This is an uncharacterized protein from Escherichia coli (strain K12).